We begin with the raw amino-acid sequence, 384 residues long: dTDP-dihydrostreptose--streptidine-6-phosphate dihydrostreptosyltransferase (384 aa).

The catalysed reaction is dTDP-L-dihydrostreptose + streptidine 6-phosphate = O-(1-&gt;4)-alpha-L-dihydrostreptosyl-streptidine 6-phosphate + dTDP + H(+). It participates in antibiotic biosynthesis; streptomycin biosynthesis. Is probably a dihydrostreptosyl glycosyltransferase, involved in the first glycosylation step condensing streptidine-6-phosphate and dihydrostreptose. This chain is dTDP-dihydrostreptose--streptidine-6-phosphate dihydrostreptosyltransferase (strH), found in Streptomyces griseus.